The sequence spans 326 residues: Endo-beta-1,4-glucanase A (326 aa).

A signal peptide spans Met-1–Gly-19. The Proton donor role is filled by Glu-150. Glu-257 (nucleophile) is an active-site residue.

Belongs to the glycosyl hydrolase 5 (cellulase A) family.

The protein localises to the secreted. It carries out the reaction Endohydrolysis of (1-&gt;4)-beta-D-glucosidic linkages in cellulose, lichenin and cereal beta-D-glucans.. Has endoglucanase activity on substrates containing beta-1,4 glycosidic bonds, like in carboxymethylcellulose (CMC), hydroxyethylcellulose (HEC) and beta-glucan. Involved in the degradation of complex natural cellulosic substrates. The sequence is that of Endo-beta-1,4-glucanase A (eglA) from Emericella nidulans (strain FGSC A4 / ATCC 38163 / CBS 112.46 / NRRL 194 / M139) (Aspergillus nidulans).